The chain runs to 892 residues: Dystroglycan 1 (892 aa).

A signal peptide spans 1–27 (MRMSAGLSLLLPLWGRTFLLLLSVAMA). Over 28-750 (QSHWPSEAGR…SSEDDVYLHT (723 aa)) the chain is Extracellular. A required for laminin recognition region spans residues 30 to 405 (HWPSEAGRDW…GQIRPTMTIP (376 aa)). The segment at 46 to 68 (SMHSVLSDLHEAVPTVVGIPDGI) is O-glycosylated at one site. N138 carries N-linked (GlcNAc...) asparagine glycosylation. A disulfide bridge connects residues C179 and C261. Residues 313–482 (ATPTPVTAIG…PPTRIRTTTS (170 aa)) are mucin-like domain. 3 O-linked (Man6P...) threonine glycosylation sites follow: T314, T316, and T376. Residues 378 to 497 (TLGPIQPTRV…GEPNQRPELK (120 aa)) form a disordered region. Residues 410–444 (PTAVATPPTTTTKKPRVSTPKPATPSTDSSTTTTR) show a composition bias toward low complexity. Residues 460–482 (TTKAPITRLETASPPTRIRTTTS) form an O-glycosylated at seven sites with GalNAc region. Residues 600–709 (RAPARFKAKF…SSIAVTGSGS (110 aa)) enclose the Peptidase S72 domain. 3 N-linked (GlcNAc...) asparagine glycosylation sites follow: N638, N646, and N658. A disulfide bridge links C666 with C710. Positions 721-742 (PRRVPSEVPSTDVPDRDPEKSS) are disordered. The segment covering 733–742 (VPDRDPEKSS) has biased composition (basic and acidic residues). A helical membrane pass occupies residues 751–771 (VIPAVVVAAILLIAGIIAMIC). At 772 to 892 (YRKKRKGKLT…YRSPPPYVPP (121 aa)) the chain is on the cytoplasmic side. A Nuclear localization signal motif is present at residues 773–779 (RKKRKGK). T787 carries the post-translational modification Phosphothreonine. Positions 816–892 (LQEEKAPLPP…YRSPPPYVPP (77 aa)) are required for interaction with CAV3. A disordered region spans residues 820–892 (KAPLPPPEYP…YRSPPPYVPP (73 aa)). A compositionally biased stretch (polar residues) spans 829-843 (PNQSVPETTPLNQDT). The span at 856–867 (NAPPYQPPPPFT) shows a compositional bias: pro residues. The required for binding DMD and UTRN stretch occupies residues 877 to 892 (PKNMTPYRSPPPYVPP). The PPXY motif signature appears at 886–889 (PPPY). Y889 bears the Phosphotyrosine; by SRC mark.

As to quaternary structure, monomer. Heterodimer of alpha- and beta-dystroglycan subunits which are the central components of the dystrophin-glycoprotein complex. This complex then can form a dystrophin-associated glycoprotein complex (DGC) which is composed of three subcomplexes: a cytoplasmic complex comprised of DMD (or UTRN), DTNA and a number of syntrophins, such as SNTB1, SNTB2, SNTG1 and SNTG2, the transmembrane dystroglycan complex, and the sarcoglycan-sarcospan complex. Interacts (via the N-terminal of alphaDAG1) with LARGE1; the interaction enhances laminin binding. Interacts with SGCD. Interacts with AGR2 and AGR3. Interacts (betaDAG1) with DMD; the interaction is inhibited by phosphorylation on the PPXY motif. Interacts (betaDAG1, via its PPXY motif) with UTRN (via its WWW and ZZ domains); the interaction is inhibited by phosphorylation on the PPXY motif. Interacts (betaDAG1, via its phosphorylated PPXY motif) with the SH2 domain-containing proteins, FYN, CSK, NCK and SHC. Interacts (betaDAG1) with CAV3 (via a central WW-like domain); the interaction disrupts the binding of DMD. BetaDAG1 directly interacts with ANK3, but not with ANK2; this interaction does not interfere with DMD-binding and is required for retention at costameres. Identified in a dystroglycan complex that contains at least PRX, DRP2, UTRN, DMD and DAG1. Interacts with POMGNT1. BetaDAG1 interacts with CD93. Post-translationally, O-glycosylated. POMGNT1 catalyzes the initial addition of N-acetylglucosamine, giving rise to the GlcNAc(beta1-2)Man(alpha1-)O-Ser/Thr moiety and thus providing the necessary basis for the addition of further carbohydrate moieties. Heavily O-glycosylated comprising of up to two thirds of its mass and the carbohydrate composition differs depending on tissue type. Mucin-type O-glycosylation is important for ligand binding activity. O-mannosylation is found in high abundance in both brain and muscle where the most abundant glycan is Sia-alpha-2-3-Gal-beta-1-4-Glc-NAc-beta-1-2-Man. In muscle, glycosylation on Thr-314, Thr-316 and Thr-376 by a phosphorylated O-mannosyl glycan with the structure 2-(N-acetylamido)-2-deoxygalactosyl-beta-1,3-2-(N-acetylamido)-2-deoxyglucosyl-beta-1,4-6-phosphomannose is mediated by like-acetylglucosaminyltransferase (LARGE1) protein amd is required for laminin binding. O-glycosylated in the N-terminal region with a core 1 or possibly core 8 glycan. The brain form displays a unique glycosylation pattern which is absent in other tissues; this form shows enhanced binding to laminin LAMA5 compared to the skeletal muscle form. N-glycosylated. In terms of processing, autolytic cleavage produces the alpha and beta subunits. In cutaneous cells, as well as in certain pathological conditions, shedding of beta-dystroglycan can occur releasing a peptide of about 30 kDa. Post-translationally, SRC-mediated phosphorylation of the PPXY motif of the beta subunit recruits SH2 domain-containing proteins, but inhibits binding to WWW domain-containing proteins, DMD and UTRN. This phosphorylation also inhibits nuclear entry.

It is found in the secreted. The protein localises to the extracellular space. The protein resides in the cell membrane. Its subcellular location is the cytoplasm. It localises to the cytoskeleton. It is found in the nucleus. The protein localises to the nucleoplasm. The protein resides in the sarcolemma. Its subcellular location is the postsynaptic cell membrane. Its function is as follows. The dystroglycan complex is involved in a number of processes including laminin and basement membrane assembly, sarcolemmal stability, cell survival, peripheral nerve myelination, nodal structure, cell migration, and epithelial polarization. Extracellular peripheral glycoprotein that acts as a receptor for extracellular matrix proteins containing laminin-G domains. Receptor for laminin-2 (LAMA2) and agrin in peripheral nerve Schwann cells. Also acts as a receptor for laminin LAMA5. Functionally, transmembrane protein that plays important roles in connecting the extracellular matrix to the cytoskeleton. Acts as a cell adhesion receptor in both muscle and non-muscle tissues. Receptor for both DMD and UTRN and, through these interactions, scaffolds axin to the cytoskeleton. Also functions in cell adhesion-mediated signaling and implicated in cell polarity. The chain is Dystroglycan 1 from Canis lupus familiaris (Dog).